Consider the following 294-residue polypeptide: Large ribosomal subunit protein uL4m (294 aa).

The tract at residues 119–139 (EVSGGGRKPWQQKGSGRARHG) is disordered. Arg-147 bears the Omega-N-methylarginine mark.

This sequence belongs to the universal ribosomal protein uL4 family. Component of the mitochondrial ribosome large subunit (39S) which comprises a 16S rRNA and about 50 distinct proteins. Interacts with MIEF1 upstream open reading frame protein.

The protein resides in the mitochondrion. The chain is Large ribosomal subunit protein uL4m (Mrpl4) from Mus musculus (Mouse).